We begin with the raw amino-acid sequence, 596 residues long: UDP-glucuronate:xylan alpha-glucuronosyltransferase 2 (596 aa).

A helical; Signal-anchor for type II membrane protein membrane pass occupies residues 17-37 (LIRFNLVLLGFSFLLYTAIFF). The Mn(2+) site is built by D395 and D397. Residues 395–397 (DAD), 424–426 (NSG), 451–455 (NGGDQ), and 504–509 (HYLGWK) each bind substrate. Mn(2+) is bound at residue H504.

The protein belongs to the glycosyltransferase 8 family. Glycogenin subfamily. Requires Mn(2+) as cofactor.

It localises to the golgi apparatus membrane. Glycosyltransferase required for the addition of both glucuronic acid and 4-O-methylglucuronic acid branches to xylan in stem cell walls. In association with GUX1, is responsible for almost all of the substitutions of the xylan backbone in stem glucuronoxylan. The protein is UDP-glucuronate:xylan alpha-glucuronosyltransferase 2 (GUX2) of Arabidopsis thaliana (Mouse-ear cress).